The following is a 118-amino-acid chain: Beta-2-microglobulin (118 aa).

Positions 1 to 20 (MAPLVALVLLGLLSLSGLDA) are cleaved as a signal peptide. An Ig-like C1-type domain is found at 25 to 112 (PKVQVYSRHP…HVTLDKPKIV (88 aa)). A disulfide bond links cysteine 45 and cysteine 99.

Belongs to the beta-2-microglobulin family. Heterodimer of an alpha chain and a beta chain. Beta-2-microglobulin is the beta-chain of major histocompatibility complex class I molecules.

It is found in the secreted. Component of the class I major histocompatibility complex (MHC). Involved in the presentation of peptide antigens to the immune system. The sequence is that of Beta-2-microglobulin (B2M) from Sus scrofa (Pig).